The sequence spans 558 residues: 2-isopropylmalate synthase (558 aa).

Residues 30 to 303 enclose the Pyruvate carboxyltransferase domain; it reads PIWCSVDLRD…DPELDCRDIE (274 aa). 4 residues coordinate Mg(2+): Asp39, His242, His244, and Asn278. The regulatory domain stretch occupies residues 437 to 558; that stretch reads QPNARIKFVD…ANRVLEERAK (122 aa).

The protein belongs to the alpha-IPM synthase/homocitrate synthase family. LeuA type 2 subfamily. Homodimer. Requires Mg(2+) as cofactor.

It is found in the cytoplasm. It catalyses the reaction 3-methyl-2-oxobutanoate + acetyl-CoA + H2O = (2S)-2-isopropylmalate + CoA + H(+). It functions in the pathway amino-acid biosynthesis; L-leucine biosynthesis; L-leucine from 3-methyl-2-oxobutanoate: step 1/4. Catalyzes the condensation of the acetyl group of acetyl-CoA with 3-methyl-2-oxobutanoate (2-ketoisovalerate) to form 3-carboxy-3-hydroxy-4-methylpentanoate (2-isopropylmalate). The sequence is that of 2-isopropylmalate synthase from Agrobacterium fabrum (strain C58 / ATCC 33970) (Agrobacterium tumefaciens (strain C58)).